Here is a 491-residue protein sequence, read N- to C-terminus: Ketol-acid reductoisomerase (NADP(+)) (491 aa).

The KARI N-terminal Rossmann domain occupies 15–208 (AQLGKCRFMG…GGHRAGVLES (194 aa)). Residues 45 to 48 (CGAQ), Arg68, Arg76, Ser78, and 108 to 110 (DKQ) contribute to the NADP(+) site. His132 is a catalytic residue. Residue Gly158 coordinates NADP(+). 2 consecutive KARI C-terminal knotted domains span residues 209-344 (SFVA…TAPQ) and 345-484 (YEGK…MTDM). Residues Asp217, Glu221, Glu389, and Glu393 each coordinate Mg(2+). Ser414 provides a ligand contact to substrate.

It belongs to the ketol-acid reductoisomerase family. The cofactor is Mg(2+).

It catalyses the reaction (2R)-2,3-dihydroxy-3-methylbutanoate + NADP(+) = (2S)-2-acetolactate + NADPH + H(+). It carries out the reaction (2R,3R)-2,3-dihydroxy-3-methylpentanoate + NADP(+) = (S)-2-ethyl-2-hydroxy-3-oxobutanoate + NADPH + H(+). It participates in amino-acid biosynthesis; L-isoleucine biosynthesis; L-isoleucine from 2-oxobutanoate: step 2/4. Its pathway is amino-acid biosynthesis; L-valine biosynthesis; L-valine from pyruvate: step 2/4. Involved in the biosynthesis of branched-chain amino acids (BCAA). Catalyzes an alkyl-migration followed by a ketol-acid reduction of (S)-2-acetolactate (S2AL) to yield (R)-2,3-dihydroxy-isovalerate. In the isomerase reaction, S2AL is rearranged via a Mg-dependent methyl migration to produce 3-hydroxy-3-methyl-2-ketobutyrate (HMKB). In the reductase reaction, this 2-ketoacid undergoes a metal-dependent reduction by NADPH to yield (R)-2,3-dihydroxy-isovalerate. This is Ketol-acid reductoisomerase (NADP(+)) from Escherichia coli (strain UTI89 / UPEC).